We begin with the raw amino-acid sequence, 200 residues long: Glycerol-3-phosphate acyltransferase (200 aa).

A run of 4 helical transmembrane segments spans residues 1 to 21 (MITV…FAVV), 84 to 104 (VIAG…FLAF), 116 to 136 (ILLG…MVVA), and 159 to 179 (FLLE…LLIL).

This sequence belongs to the PlsY family. As to quaternary structure, probably interacts with PlsX.

It localises to the cell inner membrane. It catalyses the reaction an acyl phosphate + sn-glycerol 3-phosphate = a 1-acyl-sn-glycero-3-phosphate + phosphate. Its pathway is lipid metabolism; phospholipid metabolism. Catalyzes the transfer of an acyl group from acyl-phosphate (acyl-PO(4)) to glycerol-3-phosphate (G3P) to form lysophosphatidic acid (LPA). This enzyme utilizes acyl-phosphate as fatty acyl donor, but not acyl-CoA or acyl-ACP. The polypeptide is Glycerol-3-phosphate acyltransferase (Nitrosomonas europaea (strain ATCC 19718 / CIP 103999 / KCTC 2705 / NBRC 14298)).